Consider the following 191-residue polypeptide: Probable DNA-directed RNA polymerase subunit delta (191 aa).

In terms of domain architecture, HTH HARE-type spans 14-83 (LSMIEVARAI…GENKWGLRSW (70 aa)). Composition is skewed to acidic residues over residues 117–136 (GDED…DFTE) and 142–191 (EYDE…EEEV). Positions 117 to 191 (GDEDAIDYND…DEEEEEEEEV (75 aa)) are disordered.

The protein belongs to the RpoE family. RNAP is composed of a core of 2 alpha, a beta and a beta' subunits. The core is associated with a delta subunit and one of several sigma factors.

Participates in both the initiation and recycling phases of transcription. In the presence of the delta subunit, RNAP displays an increased specificity of transcription, a decreased affinity for nucleic acids, and an increased efficiency of RNA synthesis because of enhanced recycling. The chain is Probable DNA-directed RNA polymerase subunit delta from Streptococcus agalactiae serotype Ia (strain ATCC 27591 / A909 / CDC SS700).